A 548-amino-acid chain; its full sequence is Thermolysin (548 aa).

The N-terminal stretch at 1 to 28 is a signal peptide; it reads MKMKMKLASFGLAAGLAAQVFLPYNALA. Positions 29–232 are cleaved as a propeptide — activation peptide; sequence STEHVTWNQQ…DAAKPGDVKS (204 aa). Aspartate 289, aspartate 291, glutamine 293, and aspartate 370 together coordinate Ca(2+). Histidine 374 contacts Zn(2+). Glutamate 375 is an active-site residue. Residues histidine 378 and glutamate 398 each coordinate Zn(2+). Ca(2+) contacts are provided by glutamate 409, asparagine 415, aspartate 417, glutamate 419, glutamate 422, tyrosine 425, threonine 426, isoleucine 429, and aspartate 432. Histidine 463 serves as the catalytic Proton donor.

This sequence belongs to the peptidase M4 family. Ca(2+) serves as cofactor. It depends on Zn(2+) as a cofactor.

It localises to the secreted. The enzyme catalyses Preferential cleavage: Xaa-|-Leu &gt; Xaa-|-Phe.. Functionally, extracellular zinc metalloprotease. This is Thermolysin (npr) from Bacillus thermoproteolyticus.